A 501-amino-acid chain; its full sequence is Lysine--tRNA ligase (501 aa).

Residues Glu411 and Glu418 each coordinate Mg(2+).

This sequence belongs to the class-II aminoacyl-tRNA synthetase family. As to quaternary structure, homodimer. The cofactor is Mg(2+).

It is found in the cytoplasm. It carries out the reaction tRNA(Lys) + L-lysine + ATP = L-lysyl-tRNA(Lys) + AMP + diphosphate. The protein is Lysine--tRNA ligase of Clostridium perfringens (strain 13 / Type A).